A 488-amino-acid chain; its full sequence is Fumarate hydratase (488 aa).

(S)-malate contacts are provided by Ser105, Ser147, Asn148, Thr194, and His195. The Proton donor/acceptor role is filled by His195. Residue Ser340 is part of the active site. Residues Ser341, Lys346, and Asn348 each contribute to the (S)-malate site.

The protein belongs to the class-II fumarase/aspartase family. Fumarase subfamily. Homotetramer.

The protein resides in the cytoplasm. It is found in the cytosol. It carries out the reaction (S)-malate = fumarate + H2O. In terms of biological role, catalyzes the reversible stereospecific interconversion of fumarate to L-malate. Fumarate metabolism in the cytosol plays a role during urea cycle and arginine metabolism; fumarate being a by-product of the urea cycle and amino-acid catabolism. This Schistosoma mansoni (Blood fluke) protein is Fumarate hydratase.